Here is a 622-residue protein sequence, read N- to C-terminus: Chaperone protein HscA homolog (622 aa).

The protein belongs to the heat shock protein 70 family.

Functionally, chaperone involved in the maturation of iron-sulfur cluster-containing proteins. Has a low intrinsic ATPase activity which is markedly stimulated by HscB. In Burkholderia pseudomallei (strain 668), this protein is Chaperone protein HscA homolog.